A 37-amino-acid polypeptide reads, in one-letter code: Unknown protein 25 (37 aa).

The protein is Unknown protein 25 of Pseudotsuga menziesii (Douglas-fir).